A 556-amino-acid polypeptide reads, in one-letter code: Dihydroxy-acid dehydratase (556 aa).

Aspartate 81 provides a ligand contact to Mg(2+). Residue cysteine 122 coordinates [2Fe-2S] cluster. Residues aspartate 123 and lysine 124 each contribute to the Mg(2+) site. At lysine 124 the chain carries N6-carboxylysine. Cysteine 196 is a binding site for [2Fe-2S] cluster. Glutamate 444 provides a ligand contact to Mg(2+). Serine 470 serves as the catalytic Proton acceptor.

Belongs to the IlvD/Edd family. In terms of assembly, homodimer. Requires [2Fe-2S] cluster as cofactor. The cofactor is Mg(2+).

The enzyme catalyses (2R)-2,3-dihydroxy-3-methylbutanoate = 3-methyl-2-oxobutanoate + H2O. The catalysed reaction is (2R,3R)-2,3-dihydroxy-3-methylpentanoate = (S)-3-methyl-2-oxopentanoate + H2O. It functions in the pathway amino-acid biosynthesis; L-isoleucine biosynthesis; L-isoleucine from 2-oxobutanoate: step 3/4. Its pathway is amino-acid biosynthesis; L-valine biosynthesis; L-valine from pyruvate: step 3/4. Its function is as follows. Functions in the biosynthesis of branched-chain amino acids. Catalyzes the dehydration of (2R,3R)-2,3-dihydroxy-3-methylpentanoate (2,3-dihydroxy-3-methylvalerate) into 2-oxo-3-methylpentanoate (2-oxo-3-methylvalerate) and of (2R)-2,3-dihydroxy-3-methylbutanoate (2,3-dihydroxyisovalerate) into 2-oxo-3-methylbutanoate (2-oxoisovalerate), the penultimate precursor to L-isoleucine and L-valine, respectively. This Syntrophotalea carbinolica (strain DSM 2380 / NBRC 103641 / GraBd1) (Pelobacter carbinolicus) protein is Dihydroxy-acid dehydratase.